We begin with the raw amino-acid sequence, 131 residues long: uncharacterized protein (131 aa).

An MSP domain is found at 14-130; that stretch reads FLLIYSSLEV…RRLPASFLST (117 aa).

This is an uncharacterized protein from Caenorhabditis elegans.